The primary structure comprises 515 residues: Probable cytosol aminopeptidase (515 aa).

Positions 277 and 282 each coordinate Mn(2+). Residue lysine 289 is part of the active site. Mn(2+) is bound by residues aspartate 300, aspartate 359, and glutamate 361. The active site involves arginine 363.

This sequence belongs to the peptidase M17 family. The cofactor is Mn(2+).

The protein resides in the cytoplasm. The enzyme catalyses Release of an N-terminal amino acid, Xaa-|-Yaa-, in which Xaa is preferably Leu, but may be other amino acids including Pro although not Arg or Lys, and Yaa may be Pro. Amino acid amides and methyl esters are also readily hydrolyzed, but rates on arylamides are exceedingly low.. It carries out the reaction Release of an N-terminal amino acid, preferentially leucine, but not glutamic or aspartic acids.. Presumably involved in the processing and regular turnover of intracellular proteins. Catalyzes the removal of unsubstituted N-terminal amino acids from various peptides. In Streptomyces griseus subsp. griseus (strain JCM 4626 / CBS 651.72 / NBRC 13350 / KCC S-0626 / ISP 5235), this protein is Probable cytosol aminopeptidase.